The chain runs to 189 residues: Probable nicotinate-nucleotide adenylyltransferase (189 aa).

It belongs to the NadD family.

It catalyses the reaction nicotinate beta-D-ribonucleotide + ATP + H(+) = deamido-NAD(+) + diphosphate. It participates in cofactor biosynthesis; NAD(+) biosynthesis; deamido-NAD(+) from nicotinate D-ribonucleotide: step 1/1. Its function is as follows. Catalyzes the reversible adenylation of nicotinate mononucleotide (NaMN) to nicotinic acid adenine dinucleotide (NaAD). In Staphylococcus aureus (strain USA300 / TCH1516), this protein is Probable nicotinate-nucleotide adenylyltransferase.